Consider the following 348-residue polypeptide: MEDLYGILGVDHNASVDEIRRAYRRLARELHPDINPDSADRFKAVTHAYNILSDPEQRQRYDRHVSGGFSSDFNLSDLFQSFFDTSAEFQRGSDLLVNIDIDLKTAIYGGSQVVKIDSLVVCDVCNGTRSEPGYKAEVCFDCNGSGVVRGEVRTTLGNLITQNTCSKCRGNGERIDHPCRRCYGNGSRSAPRDITINIPPGVETGMRIKIPNMGNAGGAMPGDLYVDCKVKEHPYFLRDGQDLYCRLDISLVDALLGTKVKIDSLDGELAVVIPALSQNRDVIRIANKGAVTLRGGKGDLCIVLNVLLMQKLDPEHRALLKKIMPNPPKPKLAKRTSGFFSWLKNKFT.

Residues 3-65 enclose the J domain; sequence DLYGILGVDH…EQRQRYDRHV (63 aa). The segment at 109 to 191 adopts a CR-type zinc-finger fold; sequence GGSQVVKIDS…CYGNGSRSAP (83 aa). Residues Cys-122, Cys-125, Cys-139, Cys-142, Cys-165, Cys-168, Cys-179, and Cys-182 each contribute to the Zn(2+) site. CXXCXGXG motif repeat units follow at residues 122–129, 139–146, 165–172, and 179–186; these read CDVCNGTR, CFDCNGSG, CSKCRGNG, and CRRCYGNG.

This sequence belongs to the DnaJ family. As to quaternary structure, homodimer. Requires Zn(2+) as cofactor.

It localises to the cytoplasm. Participates actively in the response to hyperosmotic and heat shock by preventing the aggregation of stress-denatured proteins and by disaggregating proteins, also in an autonomous, DnaK-independent fashion. Unfolded proteins bind initially to DnaJ; upon interaction with the DnaJ-bound protein, DnaK hydrolyzes its bound ATP, resulting in the formation of a stable complex. GrpE releases ADP from DnaK; ATP binding to DnaK triggers the release of the substrate protein, thus completing the reaction cycle. Several rounds of ATP-dependent interactions between DnaJ, DnaK and GrpE are required for fully efficient folding. Also involved, together with DnaK and GrpE, in the DNA replication of plasmids through activation of initiation proteins. This Tropheryma whipplei (strain Twist) (Whipple's bacillus) protein is Chaperone protein DnaJ.